Consider the following 854-residue polypeptide: Aryl hydrocarbon receptor (854 aa).

A propeptide spanning residues 1 to 9 (MSSGANITY) is cleaved from the precursor. Positions 1–38 (MSSGANITYASRKRRKPVQKTVKPIPAEGIKSNPSKRH) are disordered. Short sequence motifs (nuclear localization signal) lie at residues 12 to 15 (RKRR) and 36 to 41 (KRHRDR). A bHLH domain is found at 26–79 (PAEGIKSNPSKRHRDRLNTELDRLASLLPFPQDVINKLDKLSVLRLSVSYLRAK). The segment at 37-65 (RHRDRLNTELDRLASLLPFPQDVINKLDK) is DNA-binding. Required for maintaining the overall integrity of the AHR:ARNT heterodimer and its transcriptional activity stretches follow at residues 49-81 (LASLLPFPQDVINKLDKLSVLRLSVSYLRAKSF), 116-124 (LLQALNGFV), and 264-266 (FAI). Positions 63–71 (LDKLSVLRL) match the Nuclear export signal motif. The region spanning 111–175 (QEGEFLLQAL…AEFQRQLHWA (65 aa)) is the PAS 1 domain. Residues 270 to 340 (LQPPSILEIR…CAESHIRMIK (71 aa)) enclose the PAS 2 domain. Residues 346–387 (MTVFRLLAKHSRWRWVQSNARLIYRNGRPDYIIATQRPLTDE) enclose the PAC domain. The segment at 425–451 (LPIRTKSNTSRKDWAPQSTPSKDSFHP) is disordered. Positions 440–451 (PQSTPSKDSFHP) are enriched in polar residues.

As to quaternary structure, homodimer. Heterodimer; efficient DNA binding requires dimerization with another bHLH protein. Interacts with ARNT; the heterodimer ARNT:AHR binds to core DNA sequence 5'-TGCGTG-3' within the dioxin response element (DRE) of target gene promoters and activates their transcription. Binds MYBBP1A. Interacts with coactivators including SRC-1, RIP140 and NOCA7, and with the corepressor SMRT. Interacts with NEDD8 and IVNS1ABP. Interacts with BMAL1. Interacts with HSP90AB1. Interacts with TIPARP; leading to mono-ADP-ribosylation of AHR and subsequent inhibition of AHR. Post-translationally, mono-ADP-ribosylated, leading to inhibit transcription activator activity of AHR.

It is found in the cytoplasm. It localises to the nucleus. Its function is as follows. Ligand-activated transcription factor that enables cells to adapt to changing conditions by sensing compounds from the environment, diet, microbiome and cellular metabolism, and which plays important roles in development, immunity and cancer. Upon ligand binding, translocates into the nucleus, where it heterodimerizes with ARNT and induces transcription by binding to xenobiotic response elements (XRE). Regulates a variety of biological processes, including angiogenesis, hematopoiesis, drug and lipid metabolism, cell motility and immune modulation. Xenobiotics can act as ligands: upon xenobiotic-binding, activates the expression of multiple phase I and II xenobiotic chemical metabolizing enzyme genes (such as the CYP1A1 gene). Mediates biochemical and toxic effects of halogenated aromatic hydrocarbons. Next to xenobiotics, natural ligands derived from plants, microbiota, and endogenous metabolism are potent AHR agonists. Tryptophan (Trp) derivatives constitute an important class of endogenous AHR ligands. Acts as a negative regulator of anti-tumor immunity: indoles and kynurenic acid generated by Trp catabolism act as ligand and activate AHR, thereby promoting AHR-driven cancer cell motility and suppressing adaptive immunity. Regulates the circadian clock by inhibiting the basal and circadian expression of the core circadian component PER1. Inhibits PER1 by repressing the CLOCK-BMAL1 heterodimer mediated transcriptional activation of PER1. The heterodimer ARNT:AHR binds to core DNA sequence 5'-TGCGTG-3' within the dioxin response element (DRE) of target gene promoters and activates their transcription. The protein is Aryl hydrocarbon receptor (Ahr) of Mus spicilegus (Steppe mouse).